Reading from the N-terminus, the 160-residue chain is MTKKKAYKPGSATIAQNKRARHEYFIEEEFEAGLALQGWEVKSLRAGKANLSDSYVTFMNGEAYLFGATITPLNVASSHVVCDPIRTRKLLLNKRELESLFGRVSREGYTVVALSMYWKNAWSKVKIGVAKGKKDHDKRDDIKEREWKLDKARIMKNANR.

This sequence belongs to the SmpB family.

The protein localises to the cytoplasm. Required for rescue of stalled ribosomes mediated by trans-translation. Binds to transfer-messenger RNA (tmRNA), required for stable association of tmRNA with ribosomes. tmRNA and SmpB together mimic tRNA shape, replacing the anticodon stem-loop with SmpB. tmRNA is encoded by the ssrA gene; the 2 termini fold to resemble tRNA(Ala) and it encodes a 'tag peptide', a short internal open reading frame. During trans-translation Ala-aminoacylated tmRNA acts like a tRNA, entering the A-site of stalled ribosomes, displacing the stalled mRNA. The ribosome then switches to translate the ORF on the tmRNA; the nascent peptide is terminated with the 'tag peptide' encoded by the tmRNA and targeted for degradation. The ribosome is freed to recommence translation, which seems to be the essential function of trans-translation. The sequence is that of SsrA-binding protein from Pectobacterium carotovorum subsp. carotovorum (strain PC1).